Here is a 288-residue protein sequence, read N- to C-terminus: 4-diphosphocytidyl-2-C-methyl-D-erythritol kinase (288 aa).

The active site involves Lys-13. Pro-96–Ser-106 is an ATP binding site. Asp-138 is an active-site residue.

The protein belongs to the GHMP kinase family. IspE subfamily.

The enzyme catalyses 4-CDP-2-C-methyl-D-erythritol + ATP = 4-CDP-2-C-methyl-D-erythritol 2-phosphate + ADP + H(+). It participates in isoprenoid biosynthesis; isopentenyl diphosphate biosynthesis via DXP pathway; isopentenyl diphosphate from 1-deoxy-D-xylulose 5-phosphate: step 3/6. In terms of biological role, catalyzes the phosphorylation of the position 2 hydroxy group of 4-diphosphocytidyl-2C-methyl-D-erythritol. The chain is 4-diphosphocytidyl-2-C-methyl-D-erythritol kinase from Aliivibrio salmonicida (strain LFI1238) (Vibrio salmonicida (strain LFI1238)).